Consider the following 213-residue polypeptide: MGRVAGIDEAGRGPMLGPMVVAIVVCPEEKVPLLRNMGVRDSKALSPRRRLLLSRAIPSVGCSVKVRVVEPQEIDCAVRGECYENLNHLEAAVFAQLINEVLSEGELEVVYMDSPDPVPSRFEERVRALLKGQVRIVAENGADEKYTIVGAASIVAKETRDEIINALKKTYGDFGSGYPSDPRTLRFAEEWVRKHGEPPPIARKEWATWKRLR.

The RNase H type-2 domain occupies 2–213 (GRVAGIDEAG…KEWATWKRLR (212 aa)). A divalent metal cation-binding residues include Asp8, Glu9, and Asp113.

The protein belongs to the RNase HII family. The cofactor is Mn(2+). Mg(2+) serves as cofactor.

Its subcellular location is the cytoplasm. It carries out the reaction Endonucleolytic cleavage to 5'-phosphomonoester.. Functionally, endonuclease that specifically degrades the RNA of RNA-DNA hybrids. The protein is Ribonuclease HII of Thermofilum pendens (strain DSM 2475 / Hrk 5).